Reading from the N-terminus, the 89-residue chain is MAHKKAGGSSRNGRDSKGKRLGIKAFGGERVIPGNIIARQRGTTWHPGLNVGMGTDHTLFAKIEGVVEFHARANRTFISVRPVAAQAAE.

The tract at residues 1–21 is disordered; the sequence is MAHKKAGGSSRNGRDSKGKRL.

This sequence belongs to the bacterial ribosomal protein bL27 family.

The sequence is that of Large ribosomal subunit protein bL27 from Bradyrhizobium sp. (strain BTAi1 / ATCC BAA-1182).